The chain runs to 253 residues: tRNA pseudouridine synthase A (253 aa).

D53 functions as the Nucleophile in the catalytic mechanism. Position 112 (Y112) interacts with substrate.

This sequence belongs to the tRNA pseudouridine synthase TruA family. As to quaternary structure, homodimer.

It catalyses the reaction uridine(38/39/40) in tRNA = pseudouridine(38/39/40) in tRNA. In terms of biological role, formation of pseudouridine at positions 38, 39 and 40 in the anticodon stem and loop of transfer RNAs. The chain is tRNA pseudouridine synthase A from Lactococcus lactis subsp. cremoris (strain SK11).